We begin with the raw amino-acid sequence, 46 residues long: Photosystem II reaction center protein K (46 aa).

Residues 1–9 (MTTLALVLA) constitute a propeptide that is removed on maturation. A helical transmembrane segment spans residues 18-38 (FAPIVDVLPVIPVFFILLAFV).

The protein belongs to the PsbK family. PSII is composed of 1 copy each of membrane proteins PsbA, PsbB, PsbC, PsbD, PsbE, PsbF, PsbH, PsbI, PsbJ, PsbK, PsbL, PsbM, PsbT, PsbX, PsbY, PsbZ, Psb30/Ycf12, at least 3 peripheral proteins of the oxygen-evolving complex and a large number of cofactors. It forms dimeric complexes. This protein is tightly associated with CP43 (psbC), one of the core proteins.

The protein localises to the plastid. The protein resides in the chloroplast thylakoid membrane. One of the components of the core complex of photosystem II (PSII). PSII is a light-driven water:plastoquinone oxidoreductase that uses light energy to abstract electrons from H(2)O, generating O(2) and a proton gradient subsequently used for ATP formation. It consists of a core antenna complex that captures photons, and an electron transfer chain that converts photonic excitation into a charge separation. Required for assembly and/or stability of PSII. This chain is Photosystem II reaction center protein K, found in Chlamydomonas reinhardtii (Chlamydomonas smithii).